The chain runs to 241 residues: DNA repair protein RecO (241 aa).

Belongs to the RecO family.

Involved in DNA repair and RecF pathway recombination. The sequence is that of DNA repair protein RecO from Rickettsia bellii (strain OSU 85-389).